A 393-amino-acid polypeptide reads, in one-letter code: MSSRFSLTVVCLIALLPFVVGIRLIPARITSVGDGGGGGGNNGFSKLGPFMEAPEYRNGKECVSSSVNRENFVSSSSSSNDPSLVHIAMTLDSEYLRGSIAAVHSVLRHASCPENVFFHFIAAEFDSASPRVLSQLVRSTFPSLNFKVYIFREDTVINLISSSIRLALENPLNYARNYLGDILDRSVERVIYLDSDVITVDDITKLWNTVLTGSRVIGAPEYCHANFTQYFTSGFWSDPALPGLISGQKPCYFNTGVMVMDLVRWREGNYREKLEQWMQLQKKMRIYDLGSLPPFLLVFAGNVEAIDHRWNQHGLGGDNIRGSCRSLHPGPVSLLHWSGKGKPWVRLDEKRPCPLDHLWEPYDLYKHKIERAKDQSLLGFASLSELTDDSSFL.

Topologically, residues 1–4 (MSSR) are cytoplasmic. A helical; Signal-anchor for type II membrane protein membrane pass occupies residues 5–25 (FSLTVVCLIALLPFVVGIRLI). Over 26–393 (PARITSVGDG…SELTDDSSFL (368 aa)) the chain is Lumenal. Asn-226 carries an N-linked (GlcNAc...) asparagine glycan.

It belongs to the glycosyltransferase 8 family.

It localises to the golgi apparatus membrane. It functions in the pathway glycan metabolism; pectin biosynthesis. Functionally, may be involved in pectin and/or xylans biosynthesis in cell walls. This is Probable galacturonosyltransferase-like 8 (GATL8) from Arabidopsis thaliana (Mouse-ear cress).